Consider the following 702-residue polypeptide: MKLILSTLIVFIHTLLVSALPTKEGSDPNSAKKYLVSDLPGLHENITPDNSIPLMFAGQLEIYPETDTHYFFWKFSDSNPETVTNRTIFWLNGGPGCSSMDGALLETGPFRINSQQQVISNNGSWHKMGDIIYVDQPAGTGFSYSDTYITDLDQVAEYFLKFMEKYYELFPEEIGYEIYFAGESYAGQYIPYIADAILQRNKKLVDGEHKYDLRGVLIGNGWVSPNEQSLSYLPFFKDHGLIDVHHPKWATLLAKHEQCQKIVNKIDSTFDDGVVHYYEVSSSTCEAILTDLLEYTQDTASEKDQRCVNMYDYTLRDSYPSCGMNWPYELVNVGPFLRQEKVMHQLNLINLKKWNECNGRVGRTFQARHSIPAVHLLPELAKEIPVMLFNGANDIICNSQGVLSYLQKLQWNGETGFTNKDNQISWIYDNKEVGYIIWERNISFINIYNSSHMVPYDLPDVSRALIDLITGKYDEKDVDGKKSFVTYPLGSRKESDASADGEENAGSDKVPGDSPSQTIDPMISSSTASSSSVESSLSSSTASADSDSTSSKFTRLIQLAVILVIFWGVYVLYASYKSRPSSIIKKPTNNTSNVTRSSAGKKKNVQWADQLNQFEDDERTQEPNQGIIAKAIGKITGSKDTRGRYAPVQRGNGNEYIDDIELGEGLSDPNVDEFIIGSDDDEEQGQAHSGAATHNQKQKPMN.

The signal sequence occupies residues 1–19 (MKLILSTLIVFIHTLLVSA). Topologically, residues 20–555 (LPTKEGSDPN…SDSTSSKFTR (536 aa)) are lumenal. N-linked (GlcNAc...) asparagine glycans are attached at residues N85 and N122. Active-site residues include S184 and D394. N-linked (GlcNAc...) asparagine glycosylation is found at N441 and N449. Residue H452 is part of the active site. A disordered region spans residues 491–548 (SRKESDASADGEENAGSDKVPGDSPSQTIDPMISSSTASSSSVESSLSSSTASADSDS). Positions 524–548 (SSSTASSSSVESSLSSSTASADSDS) are enriched in low complexity. Residues 556 to 576 (LIQLAVILVIFWGVYVLYASY) traverse the membrane as a helical segment. Topologically, residues 577 to 702 (KSRPSSIIKK…THNQKQKPMN (126 aa)) are cytoplasmic. 2 disordered regions span residues 582–603 (SIIK…GKKK) and 660–702 (IELG…KPMN). 2 stretches are compositionally biased toward polar residues: residues 587 to 598 (PTNNTSNVTRSS) and 692 to 702 (ATHNQKQKPMN).

The protein belongs to the peptidase S10 family.

Its subcellular location is the golgi apparatus. The protein resides in the trans-Golgi network membrane. It carries out the reaction Preferential release of a C-terminal arginine or lysine residue.. In terms of biological role, protease with a carboxypeptidase B-like function involved in the C-terminal processing of the lysine and arginine residues from protein precursors. Promotes cell fusion and is involved in the programmed cell death. This chain is Pheromone-processing carboxypeptidase KEX1 (KEX1), found in Candida albicans (strain SC5314 / ATCC MYA-2876) (Yeast).